The sequence spans 175 residues: uncharacterized protein (175 aa).

Disordered regions lie at residues 68–111 and 154–175; these read NKSN…DDDQ and PERA…KLTT. Residues 95–106 show a composition bias toward low complexity; the sequence is EEQPMMPYQQPP.

Belongs to the asfivirus H171R family.

Its subcellular location is the virion. This is an uncharacterized protein from African swine fever virus (isolate Pig/Kenya/KEN-50/1950) (ASFV).